Consider the following 159-residue polypeptide: Ribosomal RNA large subunit methyltransferase H (159 aa).

Residues Leu76, Gly108, and 127 to 132 each bind S-adenosyl-L-methionine; that span reads FSKMTF.

Belongs to the RNA methyltransferase RlmH family. Homodimer.

It is found in the cytoplasm. It catalyses the reaction pseudouridine(1915) in 23S rRNA + S-adenosyl-L-methionine = N(3)-methylpseudouridine(1915) in 23S rRNA + S-adenosyl-L-homocysteine + H(+). In terms of biological role, specifically methylates the pseudouridine at position 1915 (m3Psi1915) in 23S rRNA. The polypeptide is Ribosomal RNA large subunit methyltransferase H (Bifidobacterium adolescentis (strain ATCC 15703 / DSM 20083 / NCTC 11814 / E194a)).